Consider the following 1213-residue polypeptide: Oligopeptidase PhomG' (1213 aa).

H447 is a Zn(2+) binding site. Residue E448 is part of the active site. Zn(2+) is bound by residues H451 and H454.

This sequence belongs to the peptidase M3 family. As to quaternary structure, monomer. Zn(2+) serves as cofactor.

It functions in the pathway mycotoxin biosynthesis. Functionally, oligopeptidase; part of the gene cluster that mediates the biosynthesis of the phomopsins, a group of hexapeptide mycotoxins which infects lupins and causes lupinosis disease in livestock. Within the pathway, phomG and phomG' are probably involved in the processing of the phomA and phomA' precursors. The pathway starts with the processing of the precursor phomA by several endopeptidases including kexin proteases as well as the cluster-specific S41 family peptidase phomP1 and the oligopeptidase phomG to produce 10 identical copies of the hexapeptide Tyr-Val-Ile-Pro-Ile-Asp. After being excised from the precursor peptide, the core peptides are cyclized and modified post-translationally by enzymes encoded within the gene cluster. The timing and order of proteolysis of the phomA precursor and PTMs are still unknown. Two tyrosinase-like enzymes, phomQ1 and phomQ2, catalyze the chlorination and hydroxylation of Tyr, respectively. PhomYb, is proposed to be involved in the construction of the macrocyclic structure. The other 4 ustYa family proteins may be involved in PTMs that generate the unique structure of phomopsin A. PhomYa is required for the hydroxylation of C-beta of Tyr. PhomYc, phomYd, and phomYe are responsible for the biosynthesis of 2,3-dehydroisoleucine (dIle), 2,3-dehydroaspartic acid (dAsp), and 3,4-dehydroproline (dPro), respectively. While dIle formation by phomYc is indispensable for the installation of dAsp by phomYd, the order of the other PTMs have not been elucidated yet. Most of the biosynthetic enzymes likely have broad substrate specificity, and thus, there might be a metabolic grid from a precursor to phomopsin A. The enzyme(s) responsible for the biosynthesis of 3,4-dehydrovaline (dVal) have also not been identified yet. Finally, phomM acts as an S-adenosylmethionine-dependent alpha-N-methyltransferase that catalyzes two successive N-methylation reactions, converting N-desmethyl-phomopsin A to phomopsin A and phomopsin A further to an N,N-dimethylated congener called phomopsin E. This chain is Oligopeptidase PhomG', found in Diaporthe leptostromiformis (Lupinosis disease fungus).